Reading from the N-terminus, the 142-residue chain is Small ribosomal subunit protein uS12 (142 aa).

The protein belongs to the universal ribosomal protein uS12 family. As to quaternary structure, part of the 30S ribosomal subunit.

With S4 and S5 plays an important role in translational accuracy. Located at the interface of the 30S and 50S subunits. This chain is Small ribosomal subunit protein uS12, found in Archaeoglobus fulgidus (strain ATCC 49558 / DSM 4304 / JCM 9628 / NBRC 100126 / VC-16).